A 418-amino-acid polypeptide reads, in one-letter code: Light-independent protochlorophyllide reductase subunit N (418 aa).

C17, C42, and C103 together coordinate [4Fe-4S] cluster.

The protein belongs to the BchN/ChlN family. As to quaternary structure, protochlorophyllide reductase is composed of three subunits; ChlL, ChlN and ChlB. Forms a heterotetramer of two ChlB and two ChlN subunits. [4Fe-4S] cluster serves as cofactor.

The enzyme catalyses chlorophyllide a + oxidized 2[4Fe-4S]-[ferredoxin] + 2 ADP + 2 phosphate = protochlorophyllide a + reduced 2[4Fe-4S]-[ferredoxin] + 2 ATP + 2 H2O. It functions in the pathway porphyrin-containing compound metabolism; chlorophyll biosynthesis (light-independent). In terms of biological role, component of the dark-operative protochlorophyllide reductase (DPOR) that uses Mg-ATP and reduced ferredoxin to reduce ring D of protochlorophyllide (Pchlide) to form chlorophyllide a (Chlide). This reaction is light-independent. The NB-protein (ChlN-ChlB) is the catalytic component of the complex. The protein is Light-independent protochlorophyllide reductase subunit N of Prochlorococcus marinus (strain MIT 9313).